The sequence spans 515 residues: E3 ubiquitin-protein ligase RNF217 (515 aa).

Disordered stretches follow at residues 1–125 and 147–189; these read MGEE…VLAQ and PEAP…ADPL. Residues 10-22 are compositionally biased toward gly residues; the sequence is GSGGARASGGGSA. 2 stretches are compositionally biased toward low complexity: residues 39 to 49 and 147 to 157; these read GPRAAASSSRP and PEAPSAESPSP. Positions 158-178 are enriched in pro residues; that stretch reads SESPPQAPLGPIPASPPPSFP. Residues 179 to 189 show a composition bias toward low complexity; it reads SSPLSLPADPL. The TRIAD supradomain stretch occupies residues 232–451; sequence MVLMCRVCLE…LSIFGCKYRY (220 aa). Zn(2+) is bound by residues Cys236, Cys239, Cys256, Cys259, Cys356, Cys359, His364, Cys369, Cys396, and Cys399. The segment at 236-282 adopts an RING-type 1 zinc-finger fold; it reads CRVCLEDKPIKPLPCCKKAVCEECLKIYLSSQVQLGQVEIKCPVTEC. An IBR-type zinc finger spans residues 301–369; that stretch reads IKYKYFLELG…HSPWHEGVNC (69 aa). The RING-type 2; atypical zinc finger occupies 396–425; that stretch reads CPKCKIHIQRTEGCDHMTCSQCNTNFCYRC. Cys409 is a catalytic residue. Cys414, Cys417, Cys422, Cys425, His438, and Cys447 together coordinate Zn(2+). Residues 476-496 form a helical membrane-spanning segment; that stretch reads LILVLGLALGAIAVVIGLFVF.

The protein belongs to the RBR family. RNF217 subfamily. Interacts with HAX1.

The protein resides in the membrane. The protein localises to the cytoplasm. The enzyme catalyses [E2 ubiquitin-conjugating enzyme]-S-ubiquitinyl-L-cysteine + [acceptor protein]-L-lysine = [E2 ubiquitin-conjugating enzyme]-L-cysteine + [acceptor protein]-N(6)-ubiquitinyl-L-lysine.. It functions in the pathway protein modification; protein ubiquitination. Functionally, E3 ubiquitin-protein ligase which accepts ubiquitin from E2 ubiquitin-conjugating enzymes in the form of a thioester and then directly transfers the ubiquitin to targeted substrates. Mediates the degradation of the iron exporter ferroportin/SLC40A1 and thus regulates iron homeostasis. The chain is E3 ubiquitin-protein ligase RNF217 (Rnf217) from Mus musculus (Mouse).